Consider the following 764-residue polypeptide: Zygote defective protein 12 (764 aa).

Polar residues predominate over residues 1 to 20 (MLDLTNQESDSSENGNSKYA). The tract at residues 1 to 33 (MLDLTNQESDSSENGNSKYADSTDGRGIGTSRR) is disordered. Residues 1–236 (MLDLTNQESD…ESSVITNGNG (236 aa)) form an interaction with dli-1 region. One can recognise a Calponin-homology (CH) domain in the interval 43 to 169 (RKDLADLVFW…VSLAFIGKTQ (127 aa)). Coiled-coil stretches lie at residues 244 to 405 (LSAN…HVKT) and 436 to 692 (GLES…NRLI). Residues 732 to 752 (ALPWRFGISSMLIIFMVWFFI) traverse the membrane as a helical segment.

Belongs to the hook family. In terms of assembly, homodimer. Interacts with the dynein subunit dli-1 via its N-terminus. May interact with microtubules.

It is found in the nucleus membrane. The protein localises to the cytoplasm. The protein resides in the cytoskeleton. It localises to the microtubule organizing center. Its subcellular location is the centrosome. In terms of biological role, cytoskeletal linker protein, which is essential for attachment of the centrosome to the nucleus. Required for dynein localization to the nuclear envelope. This Caenorhabditis briggsae protein is Zygote defective protein 12 (zyg-12).